Reading from the N-terminus, the 132-residue chain is Small ribosomal subunit protein uS8c (132 aa).

This sequence belongs to the universal ribosomal protein uS8 family. Part of the 30S ribosomal subunit.

It localises to the plastid. The protein localises to the chloroplast. Functionally, one of the primary rRNA binding proteins, it binds directly to 16S rRNA central domain where it helps coordinate assembly of the platform of the 30S subunit. The sequence is that of Small ribosomal subunit protein uS8c (rps8) from Amborella trichopoda.